A 265-amino-acid chain; its full sequence is Enolase-phosphatase E1 (265 aa).

Mg(2+)-binding residues include aspartate 18 and glutamate 20. Residues 144-145 and lysine 188 each bind substrate; that span reads SS. Residue aspartate 215 participates in Mg(2+) binding.

The protein belongs to the HAD-like hydrolase superfamily. MasA/MtnC family. As to quaternary structure, monomer. Requires Mg(2+) as cofactor.

It localises to the cytoplasm. The protein localises to the nucleus. The catalysed reaction is 5-methylsulfanyl-2,3-dioxopentyl phosphate + H2O = 1,2-dihydroxy-5-(methylsulfanyl)pent-1-en-3-one + phosphate. It participates in amino-acid biosynthesis; L-methionine biosynthesis via salvage pathway; L-methionine from S-methyl-5-thio-alpha-D-ribose 1-phosphate: step 3/6. It functions in the pathway amino-acid biosynthesis; L-methionine biosynthesis via salvage pathway; L-methionine from S-methyl-5-thio-alpha-D-ribose 1-phosphate: step 4/6. Its function is as follows. Bifunctional enzyme that catalyzes the enolization of 2,3-diketo-5-methylthiopentyl-1-phosphate (DK-MTP-1-P) into the intermediate 2-hydroxy-3-keto-5-methylthiopentenyl-1-phosphate (HK-MTPenyl-1-P), which is then dephosphorylated to form the acireductone 1,2-dihydroxy-3-keto-5-methylthiopentene (DHK-MTPene). In Candida albicans (strain SC5314 / ATCC MYA-2876) (Yeast), this protein is Enolase-phosphatase E1.